Consider the following 380-residue polypeptide: Genome polyprotein (380 aa).

2 disordered regions span residues 54–154 (GTVD…TGKI) and 349–380 (GNVG…QQHH). The segment covering 67 to 84 (QGTTPPATGSGAKPATSG) has biased composition (low complexity). Gly residues-rich tracts occupy residues 85 to 99 (AGSG…GVTG) and 106 to 123 (SGTG…GSGS). Low complexity predominate over residues 129-140 (NTGSAGTNATGG).

The protein belongs to the potyviridae genome polyprotein family. Genome polyprotein of potyviruses undergoes post-translational proteolytic processing by the main proteinase NIa-pro resulting in the production of at least ten individual proteins. The P1 proteinase and the HC-pro cleave only their respective C-termini autocatalytically. 6K1 is essential for proper proteolytic separation of P3 from CI.

Its subcellular location is the virion. The enzyme catalyses RNA(n) + a ribonucleoside 5'-triphosphate = RNA(n+1) + diphosphate. In terms of biological role, an RNA-dependent RNA polymerase that plays an essential role in the virus replication. Its function is as follows. Involved in aphid transmission, cell-to-cell and systemis movement, encapsidation of the viral RNA and in the regulation of viral RNA amplification. The protein is Genome polyprotein of Sorghum halepense (Johnson grass).